The primary structure comprises 387 residues: Lipid-A-disaccharide synthase (387 aa).

The protein belongs to the LpxB family.

The enzyme catalyses a lipid X + a UDP-2-N,3-O-bis[(3R)-3-hydroxyacyl]-alpha-D-glucosamine = a lipid A disaccharide + UDP + H(+). The protein operates within bacterial outer membrane biogenesis; LPS lipid A biosynthesis. In terms of biological role, condensation of UDP-2,3-diacylglucosamine and 2,3-diacylglucosamine-1-phosphate to form lipid A disaccharide, a precursor of lipid A, a phosphorylated glycolipid that anchors the lipopolysaccharide to the outer membrane of the cell. The sequence is that of Lipid-A-disaccharide synthase from Nitrosococcus oceani (strain ATCC 19707 / BCRC 17464 / JCM 30415 / NCIMB 11848 / C-107).